A 77-amino-acid polypeptide reads, in one-letter code: Acyl carrier protein (77 aa).

The Carrier domain occupies 2 to 77 (STIEERVKKV…EAIDYVVAHQ (76 aa)). S37 carries the post-translational modification O-(pantetheine 4'-phosphoryl)serine.

This sequence belongs to the acyl carrier protein (ACP) family. 4'-phosphopantetheine is transferred from CoA to a specific serine of apo-ACP by AcpS. This modification is essential for activity because fatty acids are bound in thioester linkage to the sulfhydryl of the prosthetic group.

Its subcellular location is the cytoplasm. It functions in the pathway lipid metabolism; fatty acid biosynthesis. In terms of biological role, carrier of the growing fatty acid chain in fatty acid biosynthesis. This chain is Acyl carrier protein, found in Chromohalobacter salexigens (strain ATCC BAA-138 / DSM 3043 / CIP 106854 / NCIMB 13768 / 1H11).